We begin with the raw amino-acid sequence, 310 residues long: tRNA uridine(34) hydroxylase (310 aa).

The Rhodanese domain maps to 127 to 225; sequence KDKDTIVIDT…YLEDISKEES (99 aa). Cys185 (cysteine persulfide intermediate) is an active-site residue.

This sequence belongs to the TrhO family.

It carries out the reaction uridine(34) in tRNA + AH2 + O2 = 5-hydroxyuridine(34) in tRNA + A + H2O. In terms of biological role, catalyzes oxygen-dependent 5-hydroxyuridine (ho5U) modification at position 34 in tRNAs. The protein is tRNA uridine(34) hydroxylase of Prochlorococcus marinus (strain MIT 9515).